A 215-amino-acid chain; its full sequence is Small ribosomal subunit protein uS7 (215 aa).

It belongs to the universal ribosomal protein uS7 family. In terms of assembly, part of the 30S ribosomal subunit.

In terms of biological role, one of the primary rRNA binding proteins, it binds directly to 16S rRNA where it nucleates assembly of the head domain of the 30S subunit. Is located at the subunit interface close to the decoding center. The chain is Small ribosomal subunit protein uS7 from Thermococcus onnurineus (strain NA1).